The following is a 309-amino-acid chain: Ornithine carbamoyltransferase (309 aa).

Carbamoyl phosphate is bound by residues 52-55, glutamine 79, arginine 103, and 130-133; these read STRT and HPCQ. Residues asparagine 161, aspartate 221, and 225–226 contribute to the L-ornithine site; that span reads SM. Carbamoyl phosphate-binding positions include 261–262 and arginine 289; that span reads CL.

It belongs to the aspartate/ornithine carbamoyltransferase superfamily. OTCase family.

It localises to the cytoplasm. The catalysed reaction is carbamoyl phosphate + L-ornithine = L-citrulline + phosphate + H(+). It participates in amino-acid biosynthesis; L-arginine biosynthesis; L-arginine from L-ornithine and carbamoyl phosphate: step 1/3. Functionally, reversibly catalyzes the transfer of the carbamoyl group from carbamoyl phosphate (CP) to the N(epsilon) atom of ornithine (ORN) to produce L-citrulline. The protein is Ornithine carbamoyltransferase of Methanoculleus marisnigri (strain ATCC 35101 / DSM 1498 / JR1).